The following is a 130-amino-acid chain: Follitropin subunit beta (130 aa).

Positions 1–20 (MMKLIQLCILFWCWRAICCH) are cleaved as a signal peptide. Cystine bridges form between Cys-22–Cys-70, Cys-36–Cys-85, Cys-39–Cys-123, Cys-47–Cys-101, Cys-51–Cys-103, and Cys-106–Cys-113. 2 N-linked (GlcNAc...) asparagine glycosylation sites follow: Asn-26 and Asn-43.

Belongs to the glycoprotein hormones subunit beta family. Heterodimer. The active follitropin is a heterodimer composed of an alpha chain/CGA shared with other hormones and a unique beta chain/FSHB shown here.

It localises to the secreted. In terms of biological role, together with the alpha chain CGA constitutes follitropin, the follicle-stimulating hormone, and provides its biological specificity to the hormone heterodimer. Binds FSHR, a G protein-coupled receptor, on target cells to activate downstream signaling pathways. Follitropin is involved in follicle development and spermatogenesis in reproductive organs. This is Follitropin subunit beta (Fshb) from Mus musculus (Mouse).